Consider the following 630-residue polypeptide: 1-deoxy-D-xylulose-5-phosphate synthase (630 aa).

Residues H74 and G115–A117 contribute to the thiamine diphosphate site. Position 146 (D146) interacts with Mg(2+). Thiamine diphosphate contacts are provided by residues A147–A148, N175, F284, and E364. N175 contributes to the Mg(2+) binding site.

The protein belongs to the transketolase family. DXPS subfamily. Homodimer. It depends on Mg(2+) as a cofactor. Thiamine diphosphate serves as cofactor.

It catalyses the reaction D-glyceraldehyde 3-phosphate + pyruvate + H(+) = 1-deoxy-D-xylulose 5-phosphate + CO2. It functions in the pathway metabolic intermediate biosynthesis; 1-deoxy-D-xylulose 5-phosphate biosynthesis; 1-deoxy-D-xylulose 5-phosphate from D-glyceraldehyde 3-phosphate and pyruvate: step 1/1. Catalyzes the acyloin condensation reaction between C atoms 2 and 3 of pyruvate and glyceraldehyde 3-phosphate to yield 1-deoxy-D-xylulose-5-phosphate (DXP). This Methylacidiphilum infernorum (isolate V4) (Methylokorus infernorum (strain V4)) protein is 1-deoxy-D-xylulose-5-phosphate synthase.